The following is a 357-amino-acid chain: Cobalt-precorrin-5B C(1)-methyltransferase (357 aa).

The protein belongs to the CbiD family.

The enzyme catalyses Co-precorrin-5B + S-adenosyl-L-methionine = Co-precorrin-6A + S-adenosyl-L-homocysteine. Its pathway is cofactor biosynthesis; adenosylcobalamin biosynthesis; cob(II)yrinate a,c-diamide from sirohydrochlorin (anaerobic route): step 6/10. Functionally, catalyzes the methylation of C-1 in cobalt-precorrin-5B to form cobalt-precorrin-6A. In Alkaliphilus oremlandii (strain OhILAs) (Clostridium oremlandii (strain OhILAs)), this protein is Cobalt-precorrin-5B C(1)-methyltransferase.